A 355-amino-acid chain; its full sequence is uncharacterized protein (355 aa).

A helical transmembrane segment spans residues 6–26; sequence LLTPYFLLSILSVGVFTATAA.

It belongs to the SUN family.

It localises to the membrane. This is an uncharacterized protein from Saccharomyces cerevisiae (strain ATCC 204508 / S288c) (Baker's yeast).